Consider the following 206-residue polypeptide: Small ribosomal subunit protein uS4 (206 aa).

The tract at residues 27–47 is disordered; the sequence is PSESKCNMNAAPGQHGGRRGR. One can recognise an S4 RNA-binding domain in the interval 96–158; the sequence is QRLDNVVYRM…SRKQIRIQSA (63 aa).

The protein belongs to the universal ribosomal protein uS4 family. Part of the 30S ribosomal subunit. Contacts protein S5. The interaction surface between S4 and S5 is involved in control of translational fidelity.

Functionally, one of the primary rRNA binding proteins, it binds directly to 16S rRNA where it nucleates assembly of the body of the 30S subunit. Its function is as follows. With S5 and S12 plays an important role in translational accuracy. In Dichelobacter nodosus (strain VCS1703A), this protein is Small ribosomal subunit protein uS4.